The sequence spans 1161 residues: Nardilysin (1161 aa).

The first 18 residues, 1–18 (MLRRVAVAAVCVTGRKLR), serve as a signal peptide directing secretion. Disordered regions lie at residues 49–103 (MPGR…IIKS) and 130–218 (VEGK…KKTT). Ser-85, Ser-91, and Ser-93 each carry phosphoserine. The span at 138–209 (TDEEEEEEEE…EENELEELEE (72 aa)) shows a compositional bias: acidic residues. Zn(2+) is bound at residue His-244. Glu-247 (proton acceptor) is an active-site residue. Positions 248 and 325 each coordinate Zn(2+).

Belongs to the peptidase M16 family. As to quaternary structure, interacts with BACE1 and NRG1. It depends on Zn(2+) as a cofactor. Highly expressed in brain of early postnatal mice but expressed at a lower level in the brains of adult mice. Expression is high in cortical neurons, and lower in neurons in the striatum. Very low expression detected in the corpus callosum. Also expressed in the gray matter in spinal cord and dorsal root ganglia.

Its subcellular location is the mitochondrion. The protein resides in the cell projection. The protein localises to the dendrite. The catalysed reaction is Hydrolysis of polypeptides, preferably at -Xaa-|-Arg-Lys-, and less commonly at -Arg-|-Arg-Xaa-, in which Xaa is not Arg or Lys.. Functionally, cleaves peptide substrates on the N-terminus of arginine residues in dibasic pairs. Is a critical activator of BACE1- and ADAM17-mediated pro-neuregulin ectodomain shedding, involved in the positive regulation of axonal maturation and myelination. Required for proper functioning of 2-oxoglutarate dehydrogenase (OGDH). The polypeptide is Nardilysin (Mus musculus (Mouse)).